Reading from the N-terminus, the 453-residue chain is Allantoinase (453 aa).

6 residues coordinate Zn(2+): His59, His61, Lys146, His186, His242, and Asp315. Position 146 is an N6-carboxylysine (Lys146).

The protein belongs to the metallo-dependent hydrolases superfamily. Allantoinase family. As to quaternary structure, homotetramer. Requires Zn(2+) as cofactor. Carboxylation allows a single lysine to coordinate two zinc ions.

The catalysed reaction is (S)-allantoin + H2O = allantoate + H(+). It participates in nitrogen metabolism; (S)-allantoin degradation; allantoate from (S)-allantoin: step 1/1. Its function is as follows. Catalyzes the conversion of allantoin (5-ureidohydantoin) to allantoic acid by hydrolytic cleavage of the five-member hydantoin ring. This is Allantoinase from Escherichia coli (strain SMS-3-5 / SECEC).